Reading from the N-terminus, the 225-residue chain is NAD(P)H-quinone oxidoreductase subunit K, chloroplastic (225 aa).

The [4Fe-4S] cluster site is built by Cys-43, Cys-44, Cys-108, and Cys-139.

It belongs to the complex I 20 kDa subunit family. In terms of assembly, NDH is composed of at least 16 different subunits, 5 of which are encoded in the nucleus. The cofactor is [4Fe-4S] cluster.

The protein resides in the plastid. It is found in the chloroplast thylakoid membrane. The enzyme catalyses a plastoquinone + NADH + (n+1) H(+)(in) = a plastoquinol + NAD(+) + n H(+)(out). It carries out the reaction a plastoquinone + NADPH + (n+1) H(+)(in) = a plastoquinol + NADP(+) + n H(+)(out). In terms of biological role, NDH shuttles electrons from NAD(P)H:plastoquinone, via FMN and iron-sulfur (Fe-S) centers, to quinones in the photosynthetic chain and possibly in a chloroplast respiratory chain. The immediate electron acceptor for the enzyme in this species is believed to be plastoquinone. Couples the redox reaction to proton translocation, and thus conserves the redox energy in a proton gradient. This chain is NAD(P)H-quinone oxidoreductase subunit K, chloroplastic, found in Vitis vinifera (Grape).